The primary structure comprises 117 residues: Early E3 13.3 kDa protein (117 aa).

The polypeptide is Early E3 13.3 kDa protein (Canine adenovirus serotype 1 (strain Glaxo) (CAdV-1)).